The chain runs to 145 residues: MYSLHLLLRASPAALLLILCLQLGTTKAQEDTTSRQLMTMDLQMLQIDTSEEATVVLEVSTDLRECMVVKAYLLSNIPIEGNFNYKFTSCLCNNYPRRFFWDLQTNSTVRITAVVDVIRELGICPDDWAVIPIKANRFSITKSLP.

Positions 1–28 (MYSLHLLLRASPAALLLILCLQLGTTKA) are cleaved as a signal peptide. At Gln-29 the chain carries Pyrrolidone carboxylic acid. Intrachain disulfides connect Cys-66-Cys-92 and Cys-90-Cys-124. N-linked (GlcNAc...) asparagine glycosylation occurs at Asn-106.

It belongs to the PIP family. Monomer. Interacts with AZGP1.

The protein resides in the secreted. This is Prolactin-inducible protein homolog (PIP) from Bos taurus (Bovine).